We begin with the raw amino-acid sequence, 240 residues long: Putative N-acetylmannosamine-6-phosphate 2-epimerase (240 aa).

It belongs to the NanE family.

The enzyme catalyses an N-acyl-D-glucosamine 6-phosphate = an N-acyl-D-mannosamine 6-phosphate. The protein operates within amino-sugar metabolism; N-acetylneuraminate degradation; D-fructose 6-phosphate from N-acetylneuraminate: step 3/5. In terms of biological role, converts N-acetylmannosamine-6-phosphate (ManNAc-6-P) to N-acetylglucosamine-6-phosphate (GlcNAc-6-P). The chain is Putative N-acetylmannosamine-6-phosphate 2-epimerase from Vibrio cholerae serotype O1 (strain ATCC 39315 / El Tor Inaba N16961).